The primary structure comprises 199 residues: FMN-dependent NADH:quinone oxidoreductase (199 aa).

Position 10 (Ser-10) interacts with FMN.

This sequence belongs to the azoreductase type 1 family. As to quaternary structure, homodimer. The cofactor is FMN.

It carries out the reaction 2 a quinone + NADH + H(+) = 2 a 1,4-benzosemiquinone + NAD(+). The enzyme catalyses N,N-dimethyl-1,4-phenylenediamine + anthranilate + 2 NAD(+) = 2-(4-dimethylaminophenyl)diazenylbenzoate + 2 NADH + 2 H(+). Functionally, quinone reductase that provides resistance to thiol-specific stress caused by electrophilic quinones. In terms of biological role, also exhibits azoreductase activity. Catalyzes the reductive cleavage of the azo bond in aromatic azo compounds to the corresponding amines. This is FMN-dependent NADH:quinone oxidoreductase from Cellvibrio japonicus (strain Ueda107) (Pseudomonas fluorescens subsp. cellulosa).